A 166-amino-acid polypeptide reads, in one-letter code: NAD(P)H-quinone oxidoreductase subunit I, chloroplastic (166 aa).

2 4Fe-4S ferredoxin-type domains span residues 55 to 84 (GRIH…VDWK) and 95 to 124 (LNYS…MTEE). [4Fe-4S] cluster contacts are provided by Cys-64, Cys-67, Cys-70, Cys-74, Cys-104, Cys-107, Cys-110, and Cys-114.

Belongs to the complex I 23 kDa subunit family. As to quaternary structure, NDH is composed of at least 16 different subunits, 5 of which are encoded in the nucleus. The cofactor is [4Fe-4S] cluster.

Its subcellular location is the plastid. It localises to the chloroplast thylakoid membrane. It catalyses the reaction a plastoquinone + NADH + (n+1) H(+)(in) = a plastoquinol + NAD(+) + n H(+)(out). The catalysed reaction is a plastoquinone + NADPH + (n+1) H(+)(in) = a plastoquinol + NADP(+) + n H(+)(out). NDH shuttles electrons from NAD(P)H:plastoquinone, via FMN and iron-sulfur (Fe-S) centers, to quinones in the photosynthetic chain and possibly in a chloroplast respiratory chain. The immediate electron acceptor for the enzyme in this species is believed to be plastoquinone. Couples the redox reaction to proton translocation, and thus conserves the redox energy in a proton gradient. The protein is NAD(P)H-quinone oxidoreductase subunit I, chloroplastic of Encelia californica (Bush sunflower).